Here is a 925-residue protein sequence, read N- to C-terminus: MGGQESKLAFQRGIARLASQPDIPLDDEVWVSLWSVPESCPEVYDFFPPGLIREMRDHAFVNLEKLLLVLTSRLFALKNDKKFPNPETAPASEALNCIRLLTRIIPFLNEKLDLEEWHQKFWWSLRKKRNLPKENSELDLSNFQDDLDFENSISQKNEFSQKSPSVPLSPVSTFPASSISLDASSDVSAADVSVGGSSTIKEIGSIEETFTHEKTLMEELLDTVFRLLFCRGFTLPLSSPEQYAYIIWENGIGTTETQEKTTKELAFNRIEVLRLLLVLISKRLYRSSEVASHTLTYLTCVANKQLILVFLYSLINTTLRLRPDSWKASYSTLVPYNDSSIALSKLTSQILLLFLDHTPHETTVEYFRQRLNLSPGAAIENQYRLYFSRLQLQADYEFLVNELYRLLNAPVSAISAYISIVQKPNIAFPEIILFLWQAILYNKRFRAFLITSPYATEFLTSIQFYALRYREDNEHSGLVRICLFIVHYLSCEKVLCEKLNRNCMNAQSLMSSLGFSVPPMSYAEFLIISSFHISAVKRSPFSSLSPVILLTICNIAPFVENLSFVTCAKLMQLCSSLSSPRFLFRNPRNHLLLEYLLQAISSIVENKFSQNPNLSYSIIRLQQVFLNLNSMKLPAVAQTKSQPLVALNSEGSSDFESKSSDNTSLDGTPLQNTDFKKVATVEDDSPFDELDKFSSPFSSSSSRGGLSHISSRNVSISVPTVLQDVFSDSPLVLSRKLRGKIPENVSSSELIKKCASNPFGKDLEIDSNLFAPSNSWFNSWHSRLELDSILAIISQFSLPVYKKMNEELSTTDEAVKLLANSVLNDVHPRVPNFRYFIWSVPMNNWFQSLVWLYTLSFDEKGLMATPSLFTTSKVYKQHGNIMKVASPENSSNSMENATKSILDKLDLLYLQLPSSVNHDSSLRNK.

Low complexity predominate over residues Glu-650–Ser-664. A disordered region spans residues Glu-650–Gln-671.

This sequence belongs to the hid-1 family. As to quaternary structure, interacts with ubp5.

It localises to the cytoplasm. The protein resides in the golgi apparatus. Functionally, required for the localization of ubp5 to the Golgi apparatus. Involved in detoxification of cadmium ion. This is Ubp5-interacting protein ftp105 (ftp105) from Schizosaccharomyces pombe (strain 972 / ATCC 24843) (Fission yeast).